Here is a 1770-residue protein sequence, read N- to C-terminus: Serine/threonine-protein kinase RIM15 (1770 aa).

Residues 334–358 (HSLSTFPQDNGNNNNNNNNNNNNNN) are disordered. Residues 343–358 (NGNNNNNNNNNNNNNN) are compositionally biased toward low complexity. Phosphoserine is present on residues serine 380 and serine 476. 2 disordered regions span residues 530–563 (TPTANDIRHPSPLPRSCSNTVMKLPTPRRKLDSN) and 583–694 (STIS…NSVL). Positions 583–601 (STISIDRDNNTNSRGSSMK) are enriched in polar residues. The span at 611–632 (SRTSNSERPSSSSSRLGIRSRS) shows a compositional bias: low complexity. Residues 637–660 (QKIEYSHVDNDDRTNEMLSRDKDS) are compositionally biased toward basic and acidic residues. Over residues 669–692 (TTITSSTQATTTGTKTNSNNSTNS) the composition is skewed to low complexity. Phosphothreonine is present on threonine 704. 4 positions are modified to phosphoserine: serine 709, serine 733, serine 736, and serine 737. At threonine 747 the chain carries Phosphothreonine. The Protein kinase domain maps to 794 to 1254 (YDILKPISKG…IQEIKDHPYF (461 aa)). Residues 800-808 (ISKGAYGSV) and lysine 823 contribute to the ATP site. Residue aspartate 918 is the Proton acceptor of the active site. Residues 970–980 (NNFTMNNNNSN) show a composition bias toward low complexity. Residues 970 to 1032 (NNFTMNNNNS…MTPTPSTNTV (63 aa)) are disordered. Positions 981-990 (HSQLSTPDSF) are enriched in polar residues. Residues 1014–1031 (YSSTSNSHSMTPTPSTNT) are compositionally biased toward low complexity. A phosphoserine mark is found at serine 1044, serine 1048, and serine 1064. Position 1075 is a phosphothreonine; by PHO85 (threonine 1075). An AGC-kinase C-terminal domain is found at 1255 to 1320 (KNVDWDHVYD…NTDVSELSAA (66 aa)). Residues 1378-1391 (TGYITPNGTGTTTT) are compositionally biased toward low complexity. The disordered stretch occupies residues 1378–1403 (TGYITPNGTGTTTTSAKNSPNLKNLS). The span at 1392–1401 (SAKNSPNLKN) shows a compositional bias: polar residues. Phosphoserine is present on serine 1421. Disordered stretches follow at residues 1448 to 1507 (KSEH…STFG) and 1519 to 1572 (FSTR…PANT). Over residues 1463-1481 (SSASLMGSSSDGSVSTPGS) the composition is skewed to low complexity. 4 positions are modified to phosphoserine: serine 1531, serine 1538, serine 1542, and serine 1565. The region spanning 1636–1750 (DVLVCEPIPI…ELKKLVAKYA (115 aa)) is the Response regulatory domain. Residue serine 1764 is modified to Phosphoserine.

This sequence belongs to the protein kinase superfamily. Ser/Thr protein kinase family. In terms of assembly, interacts with the cyclin-dependent kinase (CDK) PHO85 and IGO1. Autophosphorylated. Phosphorylation by PKA strongly inhibits kinase activity. Phosphorylation by cyclin-CDK PHO80-PHO85 under favorable growth condition causes inactivation of RIM15 by promoting its export to the cytoplasm.

The protein resides in the cytoplasm. It is found in the nucleus. It carries out the reaction L-seryl-[protein] + ATP = O-phospho-L-seryl-[protein] + ADP + H(+). It catalyses the reaction L-threonyl-[protein] + ATP = O-phospho-L-threonyl-[protein] + ADP + H(+). Kinase activity is inhibited by phosphorylation by cAMP-dependent protein kinase (PKA). Protein kinase that positively regulates proper entry into stationary phase of cells under nutrient starvation conditions. Involved in glycogen and trehalose accumulation, derepression of stress-induced genes, induction of thermotolerance and starvation resistance, and proper G1 cell cycle arrest. Also involved in the activation of a meiotic genes activation pathway. Phosphorylates IGO1 and IGO2, both involved in the TORC1 control of gene expression and chronological life span. This chain is Serine/threonine-protein kinase RIM15 (RIM15), found in Saccharomyces cerevisiae (strain ATCC 204508 / S288c) (Baker's yeast).